We begin with the raw amino-acid sequence, 1044 residues long: Elongation factor 3 (1044 aa).

The HEAT 1 repeat unit spans residues 5-42; it reads AQSIKVLGELFEKLSVATAENREATATEIASFLNGNII. Positions 42 and 44 each coordinate ADP. One copy of the HEAT 2 repeat lies at 45–80; that stretch reads DVPEEFFKNLTKAVKDKKTAAAALETIAHIANENNL. Serine 83 is an ADP binding site. HEAT repeat units follow at residues 86-123, 124-162, 166-203, 205-241, 242-279, and 285-323; these read PYIV…AIDP, VAIK…AAKT, LRMP…TVDN, DIER…EVTP, ATLS…LVED, and PFLE…VGNV. Threonine 392, histidine 396, and glutamate 397 together coordinate ADP. 2 ABC transporter domains span residues 426–641 and 667–993; these read DEGE…YYEL and VKVS…KKED. Positions 703, 922, 925, and 951 each coordinate ADP. The disordered stretch occupies residues 975-1044; it reads GHNWVSGQGS…DAYVSSDDEF (70 aa). The segment covering 987-999 has biased composition (basic and acidic residues); that stretch reads RLEKKEDEGDKFD. Basic residues predominate over residues 1009 to 1031; the sequence is NKKKKLSSAELRKKKKERMKKKK.

Belongs to the ABC transporter superfamily. ABCF family. EF3 subfamily. Monomer.

Its subcellular location is the cytoplasm. The catalysed reaction is ATP + H2O = ADP + phosphate + H(+). It participates in protein biosynthesis; polypeptide chain elongation. Its function is as follows. Ribosome-dependent ATPase that functions in cytoplasmic translation elongation. Required for the ATP-dependent release of deacylated tRNA from the ribosomal E-site during protein biosynthesis. Stimulates the eEF1A-dependent binding of aminoacyl-tRNA to the ribosomal A-site, which has reduced affinity for tRNA as long as the E-site is occupied. Assists translation termination by stimulating the release of nascent protein from the ribosome by release factors. This is Elongation factor 3 (TEF3) from Eremothecium gossypii (strain ATCC 10895 / CBS 109.51 / FGSC 9923 / NRRL Y-1056) (Yeast).